A 131-amino-acid chain; its full sequence is Large ribosomal subunit protein bL12 (131 aa).

The protein belongs to the bacterial ribosomal protein bL12 family. In terms of assembly, homodimer. Part of the ribosomal stalk of the 50S ribosomal subunit. Forms a multimeric L10(L12)X complex, where L10 forms an elongated spine to which 2 to 4 L12 dimers bind in a sequential fashion. Binds GTP-bound translation factors.

Forms part of the ribosomal stalk which helps the ribosome interact with GTP-bound translation factors. Is thus essential for accurate translation. The protein is Large ribosomal subunit protein bL12 of Prochlorococcus marinus (strain MIT 9301).